Reading from the N-terminus, the 361-residue chain is Alanine racemase (361 aa).

Lys34 functions as the Proton acceptor; specific for D-alanine in the catalytic mechanism. An N6-(pyridoxal phosphate)lysine modification is found at Lys34. Arg129 is a substrate binding site. Tyr256 (proton acceptor; specific for L-alanine) is an active-site residue. Met304 is a binding site for substrate.

This sequence belongs to the alanine racemase family. As to quaternary structure, homodimer. The cofactor is pyridoxal 5'-phosphate.

It catalyses the reaction L-alanine = D-alanine. The protein operates within amino-acid biosynthesis; D-alanine biosynthesis; D-alanine from L-alanine: step 1/1. Catalyzes the interconversion of L-alanine and D-alanine. May also act on other amino acids. The chain is Alanine racemase (alr) from Corynebacterium glutamicum (strain ATCC 13032 / DSM 20300 / JCM 1318 / BCRC 11384 / CCUG 27702 / LMG 3730 / NBRC 12168 / NCIMB 10025 / NRRL B-2784 / 534).